Reading from the N-terminus, the 102-residue chain is Monothiol glutaredoxin-S4 (102 aa).

The region spanning 1–101 (MDKLQKMISE…PMLKRVGALW (101 aa)) is the Glutaredoxin domain. C21 is a [2Fe-2S] cluster binding site. Residues 99–102 (ALWL) carry the Responsive for interaction with TGA factors motif.

This sequence belongs to the glutaredoxin family. CC-type subfamily.

The protein resides in the cytoplasm. Its subcellular location is the nucleus. In terms of biological role, may only reduce GSH-thiol disulfides, but not protein disulfides. This chain is Monothiol glutaredoxin-S4 (GRXS4), found in Arabidopsis thaliana (Mouse-ear cress).